Reading from the N-terminus, the 494-residue chain is Neuronal acetylcholine receptor subunit alpha-6 (494 aa).

A signal peptide spans 1–25 (MLTSKGQGFLHGGLCLWLCVFTPFF). The Extracellular portion of the chain corresponds to 26 to 239 (KGCVGCATEE…ITYSFYIRRL (214 aa)). N-linked (GlcNAc...) asparagine glycans are attached at residues Asn-54 and Asn-171. 2 disulfides stabilise this stretch: Cys-158/Cys-172 and Cys-222/Cys-223. 3 consecutive transmembrane segments (helical) span residues 240–264 (PMFYTINLIIPCLFISFLTVLVFYL), 272–290 (VTLCISVLLSLTVFLLVIT), and 306–327 (YLLFTMIFVTLSIVVTVFVLNI). Residues 328–465 (HYRTPTTHTM…WKYVAMVVDR (138 aa)) lie on the Cytoplasmic side of the membrane. Ser-401 is modified (phosphoserine). A helical membrane pass occupies residues 466–484 (VFLWVFIIVCVFGTAGLFL).

It belongs to the ligand-gated ion channel (TC 1.A.9) family. Acetylcholine receptor (TC 1.A.9.1) subfamily. Alpha-6/CHRNA6 sub-subfamily. Neuronal AChR is composed of two different types of subunits: alpha and non-alpha (beta). CHRNA6/alpha-6 subunit can be combined to CHRNB2/beta-2, CHRNA4/alpha-4 and CHRNB3/beta-3 to give rise to functional receptors. Heteropentamers containing CHRNB3 have an stoichiometry of (CHRNA6:CHRNB2)2:CHRNB3. Interacts with LYPD6.

The protein resides in the synaptic cell membrane. The catalysed reaction is Ca(2+)(in) = Ca(2+)(out). It carries out the reaction K(+)(in) = K(+)(out). It catalyses the reaction Na(+)(in) = Na(+)(out). With respect to regulation, activated by a myriad of ligands such as acetylcholine, cytisine and nicotine. CHRNA6 nAChR activity is inhibited by the antagonists alpha-conotoxin MII and PIA, a small disulfide-constrained peptides from cone snails. In terms of biological role, component of neuronal acetylcholine receptors (nAChRs) that function as pentameric, ligand-gated cation channels with high calcium permeability among other activities. nAChRs are excitatory neurotrasnmitter receptors formed by a collection of nAChR subunits known to mediate synaptic transmission in the nervous system and the neuromuscular junction. Each nAchR subunit confers differential attributes to channel properties, including activation, deactivation and desensitization kinetics, pH sensitivity, cation permeability, and binding to allosteric modulators. CHRNA6 forms pentameric channels with CHRNB2, CHRNB3 and CHRNA4 that exhibit high sensitivity to ACh and nicotine and are predominantly expressed in only a few brain areas, including dopaminergic neurons, norepirephrine neurons and cells of the visual system. nAChrs containing CHRNA6 subunits mediate endogenous cholinergic modulation of dopamine and gamma-aminobutyric acid (GABA) release in response to nicotine at nerve terminals. This Homo sapiens (Human) protein is Neuronal acetylcholine receptor subunit alpha-6.